Here is a 1509-residue protein sequence, read N- to C-terminus: Dynein axonemal assembly factor 1 homolog (1509 aa).

LRR repeat units lie at residues Arg34–Thr56, Glu57–Ser78, Lys79–Arg100, Glu101–Ile122, Val125–Val146, and Thr150–Glu171. One can recognise an LRRCT domain in the interval Pro185–Trp223. Disordered stretches follow at residues Cys252–Cys280, His306–Ser327, Ser962–Asn1008, and Thr1103–Asn1122. The segment covering Ser309–Ser318 has biased composition (low complexity). The span at Ser978–Tyr990 shows a compositional bias: acidic residues. Positions Thr1103–Gly1112 are enriched in polar residues.

The protein belongs to the DNAAF1 family.

The protein localises to the cell projection. Its subcellular location is the cilium. Cilium-specific protein required for cilia structures. In Drosophila yakuba (Fruit fly), this protein is Dynein axonemal assembly factor 1 homolog (dtr).